Here is a 72-residue protein sequence, read N- to C-terminus: uncharacterized protein (72 aa).

This is an uncharacterized protein from Archaeoglobus fulgidus (strain ATCC 49558 / DSM 4304 / JCM 9628 / NBRC 100126 / VC-16).